Here is a 115-residue protein sequence, read N- to C-terminus: Large ribosomal subunit protein bL20 (115 aa).

This sequence belongs to the bacterial ribosomal protein bL20 family.

In terms of biological role, binds directly to 23S ribosomal RNA and is necessary for the in vitro assembly process of the 50S ribosomal subunit. It is not involved in the protein synthesizing functions of that subunit. The chain is Large ribosomal subunit protein bL20 from Borrelia garinii subsp. bavariensis (strain ATCC BAA-2496 / DSM 23469 / PBi) (Borreliella bavariensis).